Reading from the N-terminus, the 65-residue chain is Prokaryotic ubiquitin-like protein Pup (65 aa).

Positions 1-38 are disordered; that stretch reads MANAQQQVFGGGGGDDAENNDAPQQGSGTQQVNVTGTD. Residues 21–59 are ARC ATPase binding; that stretch reads DAPQQGSGTQQVNVTGTDDLLDEIDGLLETNAEEFVRSY. The segment covering 22–34 has biased composition (polar residues); that stretch reads APQQGSGTQQVNV. Position 65 is a deamidated glutamine (Q65). Residue Q65 forms an Isoglutamyl lysine isopeptide (Gln-Lys) (interchain with K-? in acceptor proteins) linkage.

This sequence belongs to the prokaryotic ubiquitin-like protein family. As to quaternary structure, strongly interacts with the proteasome-associated ATPase ARC through a hydrophobic interface; the interacting region of Pup lies in its C-terminal half. There is one Pup binding site per ARC hexamer ring. Is modified by deamidation of its C-terminal glutamine to glutamate by the deamidase Dop, a prerequisite to the subsequent pupylation process.

The protein operates within protein degradation; proteasomal Pup-dependent pathway. Its function is as follows. Protein modifier that is covalently attached to lysine residues of substrate proteins, thereby targeting them for proteasomal degradation. The tagging system is termed pupylation. The sequence is that of Prokaryotic ubiquitin-like protein Pup from Corynebacterium urealyticum (strain ATCC 43042 / DSM 7109).